A 315-amino-acid chain; its full sequence is Methionyl-tRNA formyltransferase (315 aa).

A (6S)-5,6,7,8-tetrahydrofolate-binding site is contributed by 113–116; it reads SLLP.

It belongs to the Fmt family.

The enzyme catalyses L-methionyl-tRNA(fMet) + (6R)-10-formyltetrahydrofolate = N-formyl-L-methionyl-tRNA(fMet) + (6S)-5,6,7,8-tetrahydrofolate + H(+). Its function is as follows. Attaches a formyl group to the free amino group of methionyl-tRNA(fMet). The formyl group appears to play a dual role in the initiator identity of N-formylmethionyl-tRNA by promoting its recognition by IF2 and preventing the misappropriation of this tRNA by the elongation apparatus. The polypeptide is Methionyl-tRNA formyltransferase (Escherichia coli (strain SE11)).